The chain runs to 500 residues: Protein FAM114A2 (500 aa).

Positions 1 to 82 (MSNKDDLETA…AAGKETVSKD (82 aa)) are disordered. A phosphoserine mark is found at S93, S152, and S215.

This sequence belongs to the FAM114 family.

The protein is Protein FAM114A2 (FAM114A1) of Bos taurus (Bovine).